The primary structure comprises 617 residues: Electron transfer flavoprotein-ubiquinone oxidoreductase, mitochondrial (617 aa).

A mitochondrion-targeting transit peptide spans 1–33 (MMVPLAKLASPAYQCFHALKIKKNYLPLCATRW). Residue 75–80 (GAGPAG) coordinates FAD. K96 carries the post-translational modification N6-acetyllysine. Residues 109-130 (IGAHTLSGACLDPRAFEELFPD) lie within the membrane without spanning it. N6-acetyllysine occurs at positions 132 and 223. Positions 305 and 306 each coordinate a ubiquinone. N6-acetyllysine is present on K357. An intramembrane segment occupies 428–447 (IGLHVTEYEDNLKNSWVWKE). At S551 the chain carries Phosphoserine. [4Fe-4S] cluster is bound by residues C561, C586, C589, and C592. A 4Fe-4S ferredoxin-type domain is found at 577-606 (FRLQINAQNCVHCKTCDIKDPSQNINWVVP).

Monomer. [4Fe-4S] cluster serves as cofactor. Requires FAD as cofactor.

Its subcellular location is the mitochondrion inner membrane. The enzyme catalyses a ubiquinone + reduced [electron-transfer flavoprotein] = a ubiquinol + oxidized [electron-transfer flavoprotein] + H(+). Its function is as follows. Accepts electrons from ETF and reduces ubiquinone. This is Electron transfer flavoprotein-ubiquinone oxidoreductase, mitochondrial (ETFDH) from Sus scrofa (Pig).